The chain runs to 205 residues: Large ribosomal subunit protein uL4 (205 aa).

The segment at 43–96 (GKRQGTSKVKNRSAVRGGGKKPWRQKGTGRARQGSIRSPQWRGGGTVFGPTPRS) is disordered. Residues 51–71 (VKNRSAVRGGGKKPWRQKGTG) are compositionally biased toward basic residues.

Belongs to the universal ribosomal protein uL4 family. Part of the 50S ribosomal subunit.

Its function is as follows. One of the primary rRNA binding proteins, this protein initially binds near the 5'-end of the 23S rRNA. It is important during the early stages of 50S assembly. It makes multiple contacts with different domains of the 23S rRNA in the assembled 50S subunit and ribosome. Functionally, forms part of the polypeptide exit tunnel. The chain is Large ribosomal subunit protein uL4 from Lactobacillus helveticus (strain DPC 4571).